A 338-amino-acid polypeptide reads, in one-letter code: Anthranilate phosphoribosyltransferase (338 aa).

5-phospho-alpha-D-ribose 1-diphosphate is bound by residues glycine 81, 84–85, threonine 89, 91–94, 109–117, and alanine 121; these read GD, NIST, and KHGNRNLSS. Glycine 81 lines the anthranilate pocket. Serine 93 provides a ligand contact to Mg(2+). Asparagine 112 is a binding site for anthranilate. Residue arginine 167 participates in anthranilate binding. Mg(2+) contacts are provided by aspartate 226 and glutamate 227.

Belongs to the anthranilate phosphoribosyltransferase family. As to quaternary structure, homodimer. Mg(2+) is required as a cofactor.

It carries out the reaction N-(5-phospho-beta-D-ribosyl)anthranilate + diphosphate = 5-phospho-alpha-D-ribose 1-diphosphate + anthranilate. It functions in the pathway amino-acid biosynthesis; L-tryptophan biosynthesis; L-tryptophan from chorismate: step 2/5. Catalyzes the transfer of the phosphoribosyl group of 5-phosphorylribose-1-pyrophosphate (PRPP) to anthranilate to yield N-(5'-phosphoribosyl)-anthranilate (PRA). This chain is Anthranilate phosphoribosyltransferase, found in Cereibacter sphaeroides (strain ATCC 17029 / ATH 2.4.9) (Rhodobacter sphaeroides).